The chain runs to 106 residues: Glutaredoxin-1 (106 aa).

Ala1 bears the N-acetylalanine mark. In terms of domain architecture, Glutaredoxin spans 2–105 (QEFVNSKIQP…ARLKEMGALR (104 aa)). Residue Lys8 is modified to N6-succinyllysine. 2 disulfides stabilise this stretch: Cys22–Cys25 and Cys78–Cys82.

This sequence belongs to the glutaredoxin family.

It is found in the cytoplasm. Its function is as follows. Has a glutathione-disulfide oxidoreductase activity in the presence of NADPH and glutathione reductase. Reduces low molecular weight disulfides and proteins. In Oryctolagus cuniculus (Rabbit), this protein is Glutaredoxin-1 (GLRX).